The sequence spans 140 residues: Putative 6-pyruvoyl tetrahydrobiopterin synthase (140 aa).

Residue histidine 19 coordinates Zn(2+). Cysteine 38 (proton acceptor) is an active-site residue. 2 residues coordinate Zn(2+): histidine 44 and histidine 46. Catalysis depends on charge relay system residues histidine 84 and glutamate 129.

This sequence belongs to the PTPS family. As to quaternary structure, homohexamer formed of two homotrimers in a head to head fashion. The cofactor is Zn(2+).

It carries out the reaction 7,8-dihydroneopterin 3'-triphosphate = 6-pyruvoyl-5,6,7,8-tetrahydropterin + triphosphate + H(+). The protein operates within cofactor biosynthesis; tetrahydrobiopterin biosynthesis; tetrahydrobiopterin from 7,8-dihydroneopterin triphosphate: step 1/3. Functionally, involved in the biosynthesis of tetrahydrobiopterin, an essential cofactor of aromatic amino acid hydroxylases. Catalyzes the transformation of 7,8-dihydroneopterin triphosphate into 6-pyruvoyl tetrahydropterin. In Caenorhabditis elegans, this protein is Putative 6-pyruvoyl tetrahydrobiopterin synthase (ptps-1).